The following is a 636-amino-acid chain: MIVTLPLPPAIANWWPEAVTSFLQWFAFWSFSILLTVPWLFCIYQLVTNHLGRTKRIKRVLDDYTAPKVVVVMPCYREEPDVLISAIDSVVQCDYPAPCIHVFLSFDGEQVDELYLNTLGLLGVPTTLDSYPNCIDVIYKGVRITVSRFSHGGKRQCQKSTFELIDRVYADYIKQNDNIFILFIDSDCILDRVCLQNFVYDMELSPGNSRKMLAMTGVITSTTKKHSIITLLQDMEYIHGQLFERTVESGCGSVTCLPGALTMLRFSAFRRMAKYYFADKAEECDDLFDYAKCHLGEDRWLTHLFMIGAKQRYQIQMCTSAFCKTEAVQTYASLVKQRRRWFLGFITNEVCMLTDWRLWKRYPALILVRFMQNTIRTTALLFFVMVLALLTTTASVRNLPVGFMAVSLGLNWLLMLYFGAKLKRFKIWFYPLMFVLNPLFNWYYMVYGILTAGQRTWGGPRADAAAADIHTTAREAAEQAERQGDELNIVPETFKPAKEARTIVHQNQGPGIPIVRKRSVVRPPDVVDGQFSGPRNIKGVPYASRRHLQHAEPISEQANPWPAYDADGILARGGEGDAYMSDEDKRKYAIAHQAQRLRLEQRPRTGPSLNARWQNGPQASETSQGRSQVDDVGIAF.

A run of 4 helical transmembrane segments spans residues 23 to 43, 374 to 394, 399 to 419, and 427 to 447; these read LQWF…LFCI, TIRT…TTTA, LPVG…LYFG, and IWFY…YMVY. Residues 595–636 are disordered; sequence QRLRLEQRPRTGPSLNARWQNGPQASETSQGRSQVDDVGIAF. Positions 607-627 are enriched in polar residues; it reads PSLNARWQNGPQASETSQGRS.

The protein belongs to the chitin synthase family. Class VI subfamily. In terms of tissue distribution, moderately expressed during appressorium formation.

Its subcellular location is the cell membrane. The enzyme catalyses [(1-&gt;4)-N-acetyl-beta-D-glucosaminyl](n) + UDP-N-acetyl-alpha-D-glucosamine = [(1-&gt;4)-N-acetyl-beta-D-glucosaminyl](n+1) + UDP + H(+). Functionally, polymerizes chitin, a structural polymer of the cell wall and septum, by transferring the sugar moiety of UDP-GlcNAc to the non-reducing end of the growing chitin polymer. Contributes to the production of conidia but is the only chitine synthase that does not contribute to the ability of fungal conidia to germinate. Involved in fungal stress tolerances. The polypeptide is Chitin synthase VI (Metarhizium acridum (strain CQMa 102)).